The following is a 453-amino-acid chain: MFSRFHALFLLLVLSVRTYKCVSSSSSSSSSFSFSSFSSSSSSQTLVLPLKTRITPTDHRPTDKLHFHHNVTLTVTLTVGTPPQNISMVIDTGSELSWLRCNRSSNPNPVNNFDPTRSSSYSPIPCSSPTCRTRTRDFLIPASCDSDKLCHATLSYADASSSEGNLAAEIFHFGNSTNDSNLIFGCMGSVSGSDPEEDTKTTGLLGMNRGSLSFISQMGFPKFSYCISGTDDFPGFLLLGDSNFTWLTPLNYTPLIRISTPLPYFDRVAYTVQLTGIKVNGKLLPIPKSVLVPDHTGAGQTMVDSGTQFTFLLGPVYTALRSHFLNRTNGILTVYEDPDFVFQGTMDLCYRISPVRIRSGILHRLPTVSLVFEGAEIAVSGQPLLYRVPHLTVGNDSVYCFTFGNSDLMGMEAYVIGHHHQQNMWIEFDLQRSRIGLAPVECDVSGQRLGIGS.

An N-terminal signal peptide occupies residues 1 to 18 (MFSRFHALFLLLVLSVRT). A propeptide spans 19–57 (YKCVSSSSSSSSSFSFSSFSSSSSSQTLVLPLKTRITPT) (activation peptide). 2 N-linked (GlcNAc...) asparagine glycosylation sites follow: N70 and N85. In terms of domain architecture, Peptidase A1 spans 73-438 (LTVTLTVGTP…DLQRSRIGLA (366 aa)). Residue D91 is part of the active site. Residues N102, N175, N178, and N243 are each glycosylated (N-linked (GlcNAc...) asparagine). D304 is an active-site residue. N-linked (GlcNAc...) asparagine glycosylation is found at N326 and N395.

It belongs to the peptidase A1 family. Expressed specifically in developing gametophytes and developing seeds.

Its subcellular location is the endoplasmic reticulum. In terms of biological role, embryo-specific aspartic protease that limits programmed cell death during reproductive development. Possesses peptidase activity toward casein in vitro. The sequence is that of Aspartic proteinase PCS1 (PCS1) from Arabidopsis thaliana (Mouse-ear cress).